The following is a 201-amino-acid chain: Ribosome maturation factor RimP (201 aa).

It belongs to the RimP family.

The protein localises to the cytoplasm. In terms of biological role, required for maturation of 30S ribosomal subunits. In Rhizobium johnstonii (strain DSM 114642 / LMG 32736 / 3841) (Rhizobium leguminosarum bv. viciae), this protein is Ribosome maturation factor RimP.